The sequence spans 288 residues: MSQFSFTKMHGLGNSYIYVNMFEEQIPEEDLALVAEKVSNINTGIGADGMILICPSDVAPVKMRMFNNDGSEGKSCGNGLRCVAKYAYEHKLVEDTVFTIETLAGIVTAEVTVEEGKVTLAKIDMGAPRLTRAEIPMLGEGETPFIRENFLYNNHRYAFTAVSMGNSHAVIFVDDVEQAPLTTLGPVLETHEMFPERVNVEFIEILNEEEMNFRVWERGSGVTQACGTGACAAVVASILNGKMERGKEITVHLAGGDLMIAWTEEGNVLMKGPAEVICHGVYEYKIEA.

Positions 14 and 67 each coordinate substrate. Residue C76 is the Proton donor of the active site. Substrate is bound by residues 77-78, N166, N199, and 217-218; these read GN and ER. C226 functions as the Proton acceptor in the catalytic mechanism. 227–228 is a binding site for substrate; that stretch reads GT.

The protein belongs to the diaminopimelate epimerase family. As to quaternary structure, homodimer.

It is found in the cytoplasm. The catalysed reaction is (2S,6S)-2,6-diaminopimelate = meso-2,6-diaminopimelate. It participates in amino-acid biosynthesis; L-lysine biosynthesis via DAP pathway; DL-2,6-diaminopimelate from LL-2,6-diaminopimelate: step 1/1. In terms of biological role, catalyzes the stereoinversion of LL-2,6-diaminopimelate (L,L-DAP) to meso-diaminopimelate (meso-DAP), a precursor of L-lysine and an essential component of the bacterial peptidoglycan. The chain is Diaminopimelate epimerase from Bacillus thuringiensis (strain Al Hakam).